Here is a 215-residue protein sequence, read N- to C-terminus: Elongation factor Ts (215 aa).

Residues 80 to 83 are involved in Mg(2+) ion dislocation from EF-Tu; sequence TDFV.

This sequence belongs to the EF-Ts family.

The protein localises to the cytoplasm. In terms of biological role, associates with the EF-Tu.GDP complex and induces the exchange of GDP to GTP. It remains bound to the aminoacyl-tRNA.EF-Tu.GTP complex up to the GTP hydrolysis stage on the ribosome. The sequence is that of Elongation factor Ts from Alkaliphilus metalliredigens (strain QYMF).